A 609-amino-acid chain; its full sequence is Elongation factor 4 (609 aa).

Positions 5 to 187 (SKIRNFSIIA…AIVAKIPPPE (183 aa)) constitute a tr-type G domain. GTP is bound by residues 17-22 (DHGKST) and 134-137 (NKID).

The protein belongs to the TRAFAC class translation factor GTPase superfamily. Classic translation factor GTPase family. LepA subfamily.

It localises to the cell inner membrane. It carries out the reaction GTP + H2O = GDP + phosphate + H(+). Functionally, required for accurate and efficient protein synthesis under certain stress conditions. May act as a fidelity factor of the translation reaction, by catalyzing a one-codon backward translocation of tRNAs on improperly translocated ribosomes. Back-translocation proceeds from a post-translocation (POST) complex to a pre-translocation (PRE) complex, thus giving elongation factor G a second chance to translocate the tRNAs correctly. Binds to ribosomes in a GTP-dependent manner. This chain is Elongation factor 4, found in Erythrobacter litoralis (strain HTCC2594).